The sequence spans 195 residues: Imidazoleglycerol-phosphate dehydratase (195 aa).

Belongs to the imidazoleglycerol-phosphate dehydratase family.

It is found in the cytoplasm. It carries out the reaction D-erythro-1-(imidazol-4-yl)glycerol 3-phosphate = 3-(imidazol-4-yl)-2-oxopropyl phosphate + H2O. Its pathway is amino-acid biosynthesis; L-histidine biosynthesis; L-histidine from 5-phospho-alpha-D-ribose 1-diphosphate: step 6/9. The protein is Imidazoleglycerol-phosphate dehydratase of Cupriavidus pinatubonensis (strain JMP 134 / LMG 1197) (Cupriavidus necator (strain JMP 134)).